The sequence spans 435 residues: Astacin-like metalloendopeptidase (435 aa).

An N-terminal signal peptide occupies residues 1-23; the sequence is MGIMGSLWPWILTMLSLLGLSMG. Positions 85 to 282 constitute a Peptidase M12A domain; that stretch reads RLLSVTNNKW…TRVCRLYNCS (198 aa). 2 disulfides stabilise this stretch: Cys132–Cys281 and Cys153–Cys172. Residue His182 participates in Zn(2+) binding. Glu183 is an active-site residue. Zn(2+)-binding residues include His186 and His192. The segment covering 318–329 has biased composition (low complexity); sequence SEESGSSAPSGS. The disordered stretch occupies residues 318-356; it reads SEESGSSAPSGSRTGGQSIAGLGNSQQGWEHPPQSTFSV. Positions 340 to 355 are enriched in polar residues; the sequence is GNSQQGWEHPPQSTFS.

Interacts (via N-terminal domain) with SPACA3; the interaction occurs during fertilization. Requires Zn(2+) as cofactor. As to expression, ovary-specific. Expressed in secondary, antral and Graafian follicle oocytes. Expressed in the egg cells. Not detected in two-cell embryos. Not detected in naked oocytes, oocytes in primordial or unilaminar primary follicles, or in any other ovarian cells at pre-pubertal, pubertal or adult stages (at protein level). Ovary-specific.

Its subcellular location is the cytoplasm. It is found in the cell membrane. The protein localises to the cytoplasmic vesicle. The protein resides in the secretory vesicle. It localises to the cortical granule. Its activity is regulated as follows. Inhibited by wide spectrum metalloproteinase inhibitor batimastat (BB-94). Also inhibited by EDTA. In terms of biological role, oocyte-specific oolemmal receptor involved in sperm and egg adhesion and fertilization. Plays a role in the polyspermy inhibition. Probably acts as a protease for the post-fertilization cleavage of ZP2. Cleaves the sperm-binding ZP2 at the surface of the zona pellucida after fertilization and cortical granule exocytosis, rendering the zona pellucida unable to support further sperm binding. In Mus musculus (Mouse), this protein is Astacin-like metalloendopeptidase.